Reading from the N-terminus, the 367-residue chain is Flagellar P-ring protein (367 aa).

A signal peptide spans 1–21 (MYVFKALAGIVLALVATLAHA).

This sequence belongs to the FlgI family. The basal body constitutes a major portion of the flagellar organelle and consists of four rings (L,P,S, and M) mounted on a central rod.

It localises to the periplasm. The protein resides in the bacterial flagellum basal body. In terms of biological role, assembles around the rod to form the L-ring and probably protects the motor/basal body from shearing forces during rotation. The sequence is that of Flagellar P-ring protein from Salmonella arizonae (strain ATCC BAA-731 / CDC346-86 / RSK2980).